Here is a 154-residue protein sequence, read N- to C-terminus: NADPH-dependent 7-cyano-7-deazaguanine reductase (154 aa).

A compositionally biased stretch (polar residues) spans 1–21 (MPNTDVSSLSMLGHQTETASS). A disordered region spans residues 1–26 (MPNTDVSSLSMLGHQTETASSPEEAV). The active-site Thioimide intermediate is the Cys-52. The active-site Proton donor is the Asp-59. Substrate-binding positions include 74 to 76 (VES) and 93 to 94 (HE).

Belongs to the GTP cyclohydrolase I family. QueF type 1 subfamily.

It localises to the cytoplasm. The enzyme catalyses 7-aminomethyl-7-carbaguanine + 2 NADP(+) = 7-cyano-7-deazaguanine + 2 NADPH + 3 H(+). It participates in tRNA modification; tRNA-queuosine biosynthesis. Its function is as follows. Catalyzes the NADPH-dependent reduction of 7-cyano-7-deazaguanine (preQ0) to 7-aminomethyl-7-deazaguanine (preQ1). This is NADPH-dependent 7-cyano-7-deazaguanine reductase from Rhizobium etli (strain ATCC 51251 / DSM 11541 / JCM 21823 / NBRC 15573 / CFN 42).